The chain runs to 496 residues: Glycine receptor subunit beta (496 aa).

Positions 1–22 (MKFSLAVSFFILMSLLFEDACS) are cleaved as a signal peptide. The Extracellular segment spans residues 23-268 (KEKSSKKGKG…IFTLRRQVGF (246 aa)). Residue Asn-54 is glycosylated (N-linked (GlcNAc...) asparagine). 2 residues coordinate glycine: Arg-108 and Ser-174. A disulfide bond links Cys-183 and Cys-197. A glycan (N-linked (GlcNAc...) asparagine) is linked at Asn-242. Cys-243 and Cys-255 are oxidised to a cystine. Glycine is bound at residue Thr-250. The helical transmembrane segment at 269–289 (YMMGVYAPTLLIVVLSWLSFW) threads the bilayer. Residues 290–294 (INPDA) lie on the Cytoplasmic side of the membrane. A helical transmembrane segment spans residues 295–315 (SAARVPLGIFSVLSLASECTT). Residues 316-327 (LAAELPKVSYVK) are Extracellular-facing. Residues 328 to 349 (ALDVWLIACLLFGFASLVEYAV) traverse the membrane as a helical segment. The Cytoplasmic segment spans residues 350 to 471 (VQVMLNNPKR…KPVIPTAAKR (122 aa)). Position 391 is a phosphothreonine (Thr-391). Residues 472–495 (IDLYARALFPFCFLFFNVIYWSIY) form a helical membrane-spanning segment. Position 496 (Leu-496) is a topological domain, extracellular.

The protein belongs to the ligand-gated ion channel (TC 1.A.9) family. Glycine receptor (TC 1.A.9.3) subfamily. GLRB sub-subfamily. As to quaternary structure, forms heteropentamers with glycin receptor alpha subunits. Heteropentamers with GLRA1 can be composed of two GLRA1 and three GLRB subunits, or three GLRA1 and two GLRB subunits, or four GLRA1 subunits and one GLRB subunit. Forms heteropentamers with GLRA2. Functional GLRB-GLRA2 heteropentamers contain four GLRA2 subunits and one GLRB subunit, although alternative subunit composition cannot be excluded. Forms a heteropentamer with GLRA3. Interacts with GPHN. In terms of tissue distribution, detected in spinal cord and brain stem (at protein level). Detected in spinal cord, cerebellum and brain cortex.

The protein resides in the postsynaptic cell membrane. It localises to the cell membrane. The protein localises to the synapse. It is found in the perikaryon. Its subcellular location is the cell projection. The protein resides in the dendrite. It localises to the cytoplasm. The catalysed reaction is chloride(in) = chloride(out). Its activity is regulated as follows. Channel opening is triggered by extracellular glycine. Heteropentameric channels composed of GLRB and GLRA1 are activated by lower glycine levels than homopentameric GLRA1. Functionally, subunit of heteromeric glycine-gated chloride channels. Plays an important role in the down-regulation of neuronal excitability. Contributes to the generation of inhibitory postsynaptic currents. The polypeptide is Glycine receptor subunit beta (Glrb) (Rattus norvegicus (Rat)).